A 358-amino-acid chain; its full sequence is L-tryptophan methyltransferase trpM (358 aa).

Belongs to the methyltransferase superfamily.

It catalyses the reaction L-tryptophan + S-adenosyl-L-methionine = N(alpha)-methyl-L-tryptophan + S-adenosyl-L-homocysteine + H(+). The catalysed reaction is N(alpha)-methyl-L-tryptophan + S-adenosyl-L-methionine = N(alpha),N(alpha)-dimethyl-L-tryptophan + S-adenosyl-L-homocysteine + H(+). The enzyme catalyses N(alpha),N(alpha)-dimethyl-L-tryptophan + S-adenosyl-L-methionine = N(alpha),N(alpha),N(alpha)-trimethyl-L-tryptophan + S-adenosyl-L-homocysteine + H(+). Functionally, methyltransferase that catalyzes iterative L-tryptophan N-methylations to produce L-abrine (N-alpha-methyl-L-tryptophan) and N,N-alpha-dimethyl-L-tryptophan. Also catalyzes a third methylation to yield L-hypaphorine (N,N,N-alpha-trimethyl-L-tryptopan), an agonist of the phytohormone indole-3-acetic acid. Can also N-methylate the non-native amino acid substrate 4-hydroxytryptophan, but the ability to incorporate trpM into a functional psilocybin biosynthesis pathway is indeed thwarted by the inability of the L-tryptophan decarboxylase psiD to use N,N-dimethyl-4-hydroxytryptophan as substrate. The polypeptide is L-tryptophan methyltransferase trpM (Psilocybe serbica).